The sequence spans 91 residues: Cell division protein ZapA (91 aa).

Positions 59–86 (TAVNIANEYLKLKEEYDRLAAKLRREKG) form a coiled coil.

The protein belongs to the ZapA family. Type 2 subfamily. Homodimer. Interacts with FtsZ.

It is found in the cytoplasm. Its function is as follows. Activator of cell division through the inhibition of FtsZ GTPase activity, therefore promoting FtsZ assembly into bundles of protofilaments necessary for the formation of the division Z ring. It is recruited early at mid-cell but it is not essential for cell division. The chain is Cell division protein ZapA from Geobacillus thermodenitrificans (strain NG80-2).